We begin with the raw amino-acid sequence, 785 residues long: Sexual differentiation process protein isp4 (785 aa).

The segment at 1–28 (MIGSINESPIEEHMNDSPSTKEKADSVD) is disordered. Basic and acidic residues predominate over residues 10-26 (IEEHMNDSPSTKEKADS). The next 16 helical transmembrane spans lie at 94 to 114 (MWTIGLIYSTVGAAVNMFFSL), 121 to 141 (LSVLISELLAYPALQIWDLIF), 167 to 187 (LIVVMSSVSFGNAYSTDIILA), 196 to 216 (FGFGYEICLTLATQLIGYGLA), 264 to 284 (FFLYVFIASFIWNWFPSYIFQ), 339 to 359 (LMNILLGVILFFWIVTPALNF), 413 to 433 (ALAFGLSFASITSVIFHVILY), 461 to 481 (VPFYWYLSVFLAFFGMMMGTI), 490 to 510 (WWVIIVGVIFSAVWFIPIGIV), 512 to 532 (AITNIQLGLNVFTEFIVGYMY), 537 to 557 (LAMMIFKTVGYITMTQGLAFA), 572 to 592 (IMFYTQMIATIWSCFVQIGVL), 611 to 631 (YTCPNATVFFNSSVIWGVIGP), 642 to 662 (TGLQYFWLAGVLGTILFWALW), 683 to 703 (GYIPPATPVNYLAWSGIGLFF), and 732 to 752 (LSVIILFFCLQLPMVNFPDWW).

The protein belongs to the oligopeptide OPT transporter family.

The protein localises to the endoplasmic reticulum membrane. The sequence is that of Sexual differentiation process protein isp4 (isp4) from Schizosaccharomyces pombe (strain 972 / ATCC 24843) (Fission yeast).